The chain runs to 274 residues: NH(3)-dependent NAD(+) synthetase (274 aa).

An ATP-binding site is contributed by 46–53 (GISGGQDS). D52 contributes to the Mg(2+) binding site. Position 140 (R140) interacts with deamido-NAD(+). T160 serves as a coordination point for ATP. E165 serves as a coordination point for Mg(2+). K173 and D180 together coordinate deamido-NAD(+). 2 residues coordinate ATP: K189 and T211. Residue 260-261 (HK) participates in deamido-NAD(+) binding.

Belongs to the NAD synthetase family. Homodimer.

It catalyses the reaction deamido-NAD(+) + NH4(+) + ATP = AMP + diphosphate + NAD(+) + H(+). Its pathway is cofactor biosynthesis; NAD(+) biosynthesis; NAD(+) from deamido-NAD(+) (ammonia route): step 1/1. Its function is as follows. Catalyzes the ATP-dependent amidation of deamido-NAD to form NAD. Uses ammonia as a nitrogen source. The protein is NH(3)-dependent NAD(+) synthetase of Sodalis glossinidius (strain morsitans).